A 117-amino-acid polypeptide reads, in one-letter code: uncharacterized protein (117 aa).

It is found in the cytoplasm. Its subcellular location is the nucleus. This is an uncharacterized protein from Schizosaccharomyces pombe (strain 972 / ATCC 24843) (Fission yeast).